Reading from the N-terminus, the 558-residue chain is GPI mannosyltransferase 3 (558 aa).

A run of 4 helical transmembrane segments spans residues 53-73 (GLRSVLFPAVVALPFYLLKLL), 81-101 (VWFAPRVLQALVLTLIDVSVF), 164-184 (AYCGVRLYGNVIEALLVLLTL), and 190-210 (VPFLLLTGLASAIRVTSAVVL). Residue Asn-220 is glycosylated (N-linked (GlcNAc...) asparagine). The chain crosses the membrane as a helical span at residues 234-254 (IVLTGLIVLVAVLGGVMVLDY). An N-linked (GlcNAc...) asparagine glycan is attached at Asn-275. The next 4 helical transmembrane spans lie at 292 to 312 (VLVGIVGPHVLFTIAAPLVLW), 323 to 343 (PVLGMLGIGAWTLGFYSLIDH), 348 to 368 (FVFVVIPLSLITAAFVLVRWS), and 372 to 392 (AVVVKMNRLFVLFNIVMIYLM).

The protein belongs to the glycosyltransferase 22 family. PIGB subfamily.

It localises to the endoplasmic reticulum membrane. It participates in glycolipid biosynthesis; glycosylphosphatidylinositol-anchor biosynthesis. Functionally, mannosyltransferase involved in glycosylphosphatidylinositol-anchor biosynthesis. Transfers the third alpha-1,2-mannose to Man2-GlcN-acyl-PI during GPI precursor assembly. The polypeptide is GPI mannosyltransferase 3 (GPI10) (Trypanosoma brucei brucei).